A 130-amino-acid chain; its full sequence is Small ribosomal subunit protein uS8 (130 aa).

This sequence belongs to the universal ribosomal protein uS8 family. In terms of assembly, part of the 30S ribosomal subunit.

In terms of biological role, one of the primary rRNA binding proteins, it binds directly to 16S rRNA central domain where it helps coordinate assembly of the platform of the 30S subunit. The protein is Small ribosomal subunit protein uS8 of Methanopyrus kandleri (strain AV19 / DSM 6324 / JCM 9639 / NBRC 100938).